The following is a 340-amino-acid chain: Probable sugar phosphate/phosphate translocator At3g14410 (340 aa).

Transmembrane regions (helical) follow at residues 12 to 32 (EFVT…QIFF), 44 to 64 (FPYP…LCFL), 80 to 100 (LEIY…TLWL), 110 to 130 (VAFA…LGVA), 141 to 161 (LLIM…ELNI), 163 to 183 (WIGV…LIFM), 197 to 217 (ISLM…PWIF), 234 to 254 (VVLT…FLVI), 260 to 282 (LTIR…LLFA), and 286 to 305 (LTII…AAYN). The segment at 320-340 (ETPGDAESIPLVSQGNTNTER) is disordered. Polar residues predominate over residues 330–340 (LVSQGNTNTER).

The protein belongs to the TPT transporter family. TPT (TC 2.A.7.9) subfamily.

Its subcellular location is the membrane. This chain is Probable sugar phosphate/phosphate translocator At3g14410, found in Arabidopsis thaliana (Mouse-ear cress).